The sequence spans 121 residues: Trypsin/alpha-amylase inhibitor CMX1/CMX3 (121 aa).

A signal peptide spans 1–24; sequence MAFKHQLILSTAILLAVLAAASAS.

The protein belongs to the protease inhibitor I6 (cereal trypsin/alpha-amylase inhibitor) family.

The protein resides in the secreted. This Triticum aestivum (Wheat) protein is Trypsin/alpha-amylase inhibitor CMX1/CMX3.